The following is a 71-amino-acid chain: Dermonecrotic toxin LgSicTox-alphaI-Loxn-A (71 aa).

Residue H12 is part of the active site. Positions 32, 34, and 48 each coordinate Mg(2+).

It depends on Mg(2+) as a cofactor. Contains 2 disulfide bonds. In terms of tissue distribution, expressed by the venom gland.

The protein localises to the secreted. The catalysed reaction is an N-(acyl)-sphingosylphosphocholine = an N-(acyl)-sphingosyl-1,3-cyclic phosphate + choline. It carries out the reaction an N-(acyl)-sphingosylphosphoethanolamine = an N-(acyl)-sphingosyl-1,3-cyclic phosphate + ethanolamine. The enzyme catalyses a 1-acyl-sn-glycero-3-phosphocholine = a 1-acyl-sn-glycero-2,3-cyclic phosphate + choline. It catalyses the reaction a 1-acyl-sn-glycero-3-phosphoethanolamine = a 1-acyl-sn-glycero-2,3-cyclic phosphate + ethanolamine. Functionally, catalyzes the hydrolysis of sphingomyelin. May also act on other phosphatidyl esters. Dermonecrotic toxins cleave the phosphodiester linkage between the phosphate and headgroup of certain phospholipids (sphingolipid and lysolipid substrates), forming an alcohol (often choline) and a cyclic phosphate. This toxin acts on sphingomyelin (SM). It may also act on ceramide phosphoethanolamine (CPE), lysophosphatidylcholine (LPC) and lysophosphatidylethanolamine (LPE), but not on lysophosphatidylserine (LPS), and lysophosphatidylglycerol (LPG). It acts by transphosphatidylation, releasing exclusively cyclic phosphate products as second products. In vivo, induces dermonecrosis, but is not lethal. Induces hemolysis, vascular permeability, edema, inflammatory response, and platelet aggregation. This chain is Dermonecrotic toxin LgSicTox-alphaI-Loxn-A, found in Loxosceles gaucho (Spider).